A 364-amino-acid chain; its full sequence is Developmentally-regulated GTP-binding protein 2 (364 aa).

(3S)-3-hydroxylysine is present on K21. The OBG-type G domain maps to 63–288; that stretch reads ARVALIGFPS…LLEMLWEYLA (226 aa). Residues 69 to 76, 94 to 98, 115 to 118, 246 to 249, and 269 to 271 each bind GTP; these read GFPSVGKS, FTTLT, DLPG, NKID, and SCG. Positions 76 and 96 each coordinate Mg(2+). The 76-residue stretch at 288-363 folds into the TGS domain; sequence ALTCIYTKKR…EHEDVIQIVK (76 aa).

This sequence belongs to the TRAFAC class OBG-HflX-like GTPase superfamily. OBG GTPase family. Interacts with RWDD1; this interaction confers protection to polyubiquitination and proteolytic degradation. Interacts with JMJD7; this interaction is direct. The cofactor is Mg(2+). In terms of processing, polyubiquitinated. Hydroxylated (with S stereochemistry) at C-3 of Lys-21 by JMJD7. In terms of tissue distribution, fairly high levels in liver, heart, kidney, and brain. Very low levels in lung, spleen, testis and skeletal muscle.

Its subcellular location is the nucleus. It is found in the cytoplasm. The enzyme catalyses GTP + H2O = GDP + phosphate + H(+). In terms of biological role, catalyzes the conversion of GTP to GDP through hydrolysis of the gamma-phosphate bond in GTP. When hydroxylated at C-3 of 'Lys-21' by JMJD7, may bind to RNA and play a role in translation. This is Developmentally-regulated GTP-binding protein 2 (Drg2) from Mus musculus (Mouse).